Here is a 487-residue protein sequence, read N- to C-terminus: Glutamyl-tRNA(Gln) amidotransferase subunit A (487 aa).

Residues lysine 79 and serine 154 each act as charge relay system in the active site. The Acyl-ester intermediate role is filled by serine 178.

Belongs to the amidase family. GatA subfamily. As to quaternary structure, heterotrimer of A, B and C subunits.

The catalysed reaction is L-glutamyl-tRNA(Gln) + L-glutamine + ATP + H2O = L-glutaminyl-tRNA(Gln) + L-glutamate + ADP + phosphate + H(+). Functionally, allows the formation of correctly charged Gln-tRNA(Gln) through the transamidation of misacylated Glu-tRNA(Gln) in organisms which lack glutaminyl-tRNA synthetase. The reaction takes place in the presence of glutamine and ATP through an activated gamma-phospho-Glu-tRNA(Gln). This is Glutamyl-tRNA(Gln) amidotransferase subunit A from Roseiflexus sp. (strain RS-1).